A 315-amino-acid polypeptide reads, in one-letter code: Probable HTH-type transcriptional regulator SinR (315 aa).

Residues 8 to 65 (RGMRDWMIFIKVAEVGNLSRAARELDISISAVSKSLSRLENSIEVTLLRRDSHHLELT) form the HTH lysR-type domain. A DNA-binding region (H-T-H motif) is located at residues 25–44 (LSRAARELDISISAVSKSLS).

It belongs to the LysR transcriptional regulatory family.

Functionally, probable regulatory protein. Its target is not known. This is Probable HTH-type transcriptional regulator SinR (sinR) from Salmonella typhimurium (strain LT2 / SGSC1412 / ATCC 700720).